The sequence spans 456 residues: D-glycerate 3-kinase, chloroplastic (456 aa).

A chloroplast-targeting transit peptide spans 1 to 63; it reads MAVAISGSSL…KFNDHVVNPS (63 aa). Position 215–222 (215–222) interacts with ATP; sequence APQGCGKT.

Belongs to the GLYK kinase family.

It localises to the plastid. Its subcellular location is the chloroplast. It is found in the cytoplasm. It carries out the reaction (R)-glycerate + ATP = (2R)-3-phosphoglycerate + ADP + H(+). The protein operates within photosynthesis; photorespiration; 3-phospho-D-glycerate from glycine: step 4/4. Functionally, catalyzes the concluding reaction of the photorespiratory C2 cycle, an indispensable ancillary metabolic pathway to the photosynthetic C3 cycle that enables land plants to grow in an oxygen-containing atmosphere. Cytoplasmic D-glycerate 3-kinase that constitutes a photorespiratory bypass that alleviates fluctuating light-induced photoinhibition. The sequence is that of D-glycerate 3-kinase, chloroplastic from Arabidopsis thaliana (Mouse-ear cress).